Here is a 311-residue protein sequence, read N- to C-terminus: Lipid A biosynthesis acyltransferase (311 aa).

A helical transmembrane segment spans residues 19-39 (WLFWLGVAIWRSILCLPYPIL). Positions 134–139 (HFLTLE) match the HXXXXD motif motif.

This sequence belongs to the LpxL/LpxM/LpxP family.

It is found in the cell inner membrane. The enzyme catalyses an alpha-Kdo-(2-&gt;4)-alpha-Kdo-(2-&gt;6)-lipid IVA + a fatty acyl-[ACP] = an alpha-Kdo-(2-&gt;4)-alpha-Kdo-(2-&gt;6)-(acyl)-lipid IVA + holo-[ACP]. The protein operates within glycolipid biosynthesis; KDO(2)-lipid A biosynthesis; KDO(2)-lipid A from CMP-3-deoxy-D-manno-octulosonate and lipid IV(A): step 3/4. Its pathway is bacterial outer membrane biogenesis; lipopolysaccharide biosynthesis. In terms of biological role, catalyzes the transfer of an acyl chain from an acyl-[acyl-carrier-protein] (ACP) to a Kdo(2)-lipid IV(A) to form a Kdo(2)-(acyl)-lipid IV(A). This Haemophilus influenzae (strain ATCC 51907 / DSM 11121 / KW20 / Rd) protein is Lipid A biosynthesis acyltransferase.